The following is a 77-amino-acid chain: Conotoxin ArMKLT2-022 (77 aa).

An N-terminal signal peptide occupies residues methionine 1–alanine 22. Positions aspartate 23–threonine 46 are excised as a propeptide. Glutamine 49 is modified (pyrrolidone carboxylic acid). 3 disulfides stabilise this stretch: cysteine 50–cysteine 65, cysteine 57–cysteine 68, and cysteine 64–cysteine 73.

This sequence belongs to the conotoxin O1 superfamily. Expressed by the venom duct.

Its subcellular location is the secreted. The sequence is that of Conotoxin ArMKLT2-022 from Conus arenatus (Sand-dusted cone).